Consider the following 697-residue polypeptide: Serotransferrin (697 aa).

The signal sequence occupies residues 1–19 (MRLTVGALLACAALGLCLA). 2 Transferrin-like domains span residues 25–347 (VKWC…NQQE) and 360–682 (VKWC…NMRK). 2 cysteine pairs are disulfide-bonded: Cys28-Cys67 and Cys38-Cys58. A Dimethylated arginine modification is found at Arg42. Asp82 and Tyr114 together coordinate Fe(3+). 8 cysteine pairs are disulfide-bonded: Cys137–Cys213, Cys156–Cys350, Cys177–Cys193, Cys180–Cys196, Cys190–Cys198, Cys246–Cys260, Cys363–Cys395, and Cys373–Cys386. Positions 139, 143, 145, and 146 each coordinate hydrogencarbonate. Residue Tyr207 participates in Fe(3+) binding. His268 is a binding site for Fe(3+). Residue Ser388 is modified to Phosphoserine. Fe(3+) is bound by residues Asp410 and Tyr448. 8 disulfides stabilise this stretch: Cys420-Cys692, Cys435-Cys655, Cys472-Cys543, Cys496-Cys683, Cys506-Cys520, Cys517-Cys526, Cys583-Cys597, and Cys633-Cys638. Thr474, Arg478, Ala480, and Gly481 together coordinate hydrogencarbonate. Asn513 is a glycosylation site (N-linked (GlcNAc...) asparagine). Tyr537 contributes to the Fe(3+) binding site. Position 605 (His605) interacts with Fe(3+). Position 684 is a phosphoserine (Ser684).

It belongs to the transferrin family. As to quaternary structure, monomer. Part of a complex composed of SLC40A1/ferroportin, TF/transferrin and HEPH/hephaestin that transfers iron from cells to transferrin. As to expression, expressed by the liver and secreted in plasma.

It is found in the secreted. In terms of biological role, transferrins are iron binding transport proteins which can bind two Fe(3+) ions in association with the binding of an anion, usually bicarbonate. It is responsible for the transport of iron from sites of absorption and heme degradation to those of storage and utilization. Serum transferrin may also have a further role in stimulating cell proliferation. The sequence is that of Serotransferrin (Tf) from Mus musculus (Mouse).